Here is a 244-residue protein sequence, read N- to C-terminus: Probable cytokinin riboside 5'-monophosphate phosphoribohydrolase LOGL2 (244 aa).

Residues Glu91, 109-110 (RK), and 126-132 (GYGTLEE) each bind substrate.

Belongs to the LOG family.

The catalysed reaction is N(6)-(dimethylallyl)adenosine 5'-phosphate + H2O = N(6)-dimethylallyladenine + D-ribose 5-phosphate. It catalyses the reaction 9-ribosyl-trans-zeatin 5'-phosphate + H2O = trans-zeatin + D-ribose 5-phosphate. Its function is as follows. Cytokinin-activating enzyme working in the direct activation pathway. Phosphoribohydrolase that converts inactive cytokinin nucleotides to the biologically active free-base forms. The protein is Probable cytokinin riboside 5'-monophosphate phosphoribohydrolase LOGL2 (LOGL2) of Oryza sativa subsp. japonica (Rice).